The following is a 554-amino-acid chain: Hydroxylamine reductase (554 aa).

[2Fe-2S] cluster-binding residues include Cys-3, Cys-6, Cys-18, and Cys-25. Residues His-252, Glu-276, Cys-320, Cys-408, Cys-436, Cys-461, Glu-495, and Lys-497 each coordinate hybrid [4Fe-2O-2S] cluster. At Cys-408 the chain carries Cysteine persulfide.

The protein belongs to the HCP family. Requires [2Fe-2S] cluster as cofactor. Hybrid [4Fe-2O-2S] cluster serves as cofactor.

It is found in the cytoplasm. The catalysed reaction is A + NH4(+) + H2O = hydroxylamine + AH2 + H(+). In terms of biological role, catalyzes the reduction of hydroxylamine to form NH(3) and H(2)O. In Shewanella baltica (strain OS195), this protein is Hydroxylamine reductase.